The primary structure comprises 207 residues: Thiamine-phosphate synthase (207 aa).

4-amino-2-methyl-5-(diphosphooxymethyl)pyrimidine contacts are provided by residues 38–42 (QYRAK) and N70. The Mg(2+) site is built by D71 and D90. Position 109 (T109) interacts with 4-amino-2-methyl-5-(diphosphooxymethyl)pyrimidine. Residue 135 to 137 (TNS) coordinates 2-[(2R,5Z)-2-carboxy-4-methylthiazol-5(2H)-ylidene]ethyl phosphate. Position 138 (K138) interacts with 4-amino-2-methyl-5-(diphosphooxymethyl)pyrimidine. 2-[(2R,5Z)-2-carboxy-4-methylthiazol-5(2H)-ylidene]ethyl phosphate-binding positions include G165 and 185 to 186 (IS).

The protein belongs to the thiamine-phosphate synthase family. Mg(2+) serves as cofactor.

It catalyses the reaction 2-[(2R,5Z)-2-carboxy-4-methylthiazol-5(2H)-ylidene]ethyl phosphate + 4-amino-2-methyl-5-(diphosphooxymethyl)pyrimidine + 2 H(+) = thiamine phosphate + CO2 + diphosphate. The enzyme catalyses 2-(2-carboxy-4-methylthiazol-5-yl)ethyl phosphate + 4-amino-2-methyl-5-(diphosphooxymethyl)pyrimidine + 2 H(+) = thiamine phosphate + CO2 + diphosphate. The catalysed reaction is 4-methyl-5-(2-phosphooxyethyl)-thiazole + 4-amino-2-methyl-5-(diphosphooxymethyl)pyrimidine + H(+) = thiamine phosphate + diphosphate. Its pathway is cofactor biosynthesis; thiamine diphosphate biosynthesis; thiamine phosphate from 4-amino-2-methyl-5-diphosphomethylpyrimidine and 4-methyl-5-(2-phosphoethyl)-thiazole: step 1/1. Condenses 4-methyl-5-(beta-hydroxyethyl)thiazole monophosphate (THZ-P) and 2-methyl-4-amino-5-hydroxymethyl pyrimidine pyrophosphate (HMP-PP) to form thiamine monophosphate (TMP). This is Thiamine-phosphate synthase from Clostridium perfringens (strain 13 / Type A).